Consider the following 177-residue polypeptide: Large ribosomal subunit protein uL6 (177 aa).

The protein belongs to the universal ribosomal protein uL6 family. As to quaternary structure, part of the 50S ribosomal subunit.

Its function is as follows. This protein binds to the 23S rRNA, and is important in its secondary structure. It is located near the subunit interface in the base of the L7/L12 stalk, and near the tRNA binding site of the peptidyltransferase center. In Haemophilus ducreyi (strain 35000HP / ATCC 700724), this protein is Large ribosomal subunit protein uL6.